The sequence spans 1816 residues: uncharacterized protein (1816 aa).

Disordered stretches follow at residues 338–357 (DSSSSSSNNNNNNNNNNNNN) and 562–605 (ELEK…IKPK). Residues 339-357 (SSSSSSNNNNNNNNNNNNN) are compositionally biased toward low complexity. Basic and acidic residues predominate over residues 562 to 577 (ELEKERIKKEKEDSKK). Residues 581–603 (KQSSSSSSSSTTTTSTTTSSTIK) show a composition bias toward low complexity. The 174-residue stretch at 826–999 (LDIVDKRESA…FLKKIDPNRK (174 aa)) folds into the Helicase ATP-binding domain. 839 to 846 (ASTSSGKT) contacts ATP. Positions 949–952 (DEVH) match the DEAH box motif. The region spanning 1198–1379 (QLDLVIERFQ…SVVSPSLCLS (182 aa)) is the Helicase C-terminal domain. Residues 1388 to 1487 (TNGSANKSNE…TTTKTPTTTS (100 aa)) are disordered. A compositionally biased stretch (basic and acidic residues) spans 1395–1427 (SNEENKVQVKENEKEREKEKEKEKEKEKEKETI). Over residues 1445–1454 (NWDDDEEETA) the composition is skewed to acidic residues. Positions 1456 to 1487 (STKTTPATTPTTTTTENTPATTTTTKTPTTTS) are enriched in low complexity.

This sequence belongs to the helicase family. SKI2 subfamily.

The protein resides in the nucleus. This is an uncharacterized protein from Dictyostelium discoideum (Social amoeba).